We begin with the raw amino-acid sequence, 234 residues long: Probable transcriptional regulatory protein MYCGA1330 (234 aa).

Belongs to the TACO1 family.

Its subcellular location is the cytoplasm. The chain is Probable transcriptional regulatory protein MYCGA1330 from Mycoplasmoides gallisepticum (strain R(low / passage 15 / clone 2)) (Mycoplasma gallisepticum).